Consider the following 102-residue polypeptide: Small ribosomal subunit protein uS10 (102 aa).

It belongs to the universal ribosomal protein uS10 family. Part of the 30S ribosomal subunit.

Functionally, involved in the binding of tRNA to the ribosomes. The sequence is that of Small ribosomal subunit protein uS10 from Lacticaseibacillus casei (strain BL23) (Lactobacillus casei).